A 142-amino-acid chain; its full sequence is MAKKVQAYVKLQVAAGMANPSPPVGPALGQQGVNIMEFCKAFNARTESLEKGLPIPVVITVYADRSFTFVTKTPPAAVLLKKAVGIKSGSGKPNKDKVGTVTQEQLRQIAETKAADMTGATIETKMKSIAGTARSMGLIVEE.

This sequence belongs to the universal ribosomal protein uL11 family. As to quaternary structure, part of the ribosomal stalk of the 50S ribosomal subunit. Interacts with L10 and the large rRNA to form the base of the stalk. L10 forms an elongated spine to which L12 dimers bind in a sequential fashion forming a multimeric L10(L12)X complex. One or more lysine residues are methylated.

Forms part of the ribosomal stalk which helps the ribosome interact with GTP-bound translation factors. The sequence is that of Large ribosomal subunit protein uL11 from Haemophilus ducreyi (strain 35000HP / ATCC 700724).